A 260-amino-acid chain; its full sequence is MQKDYQKLIVYLCDFLEKEVQKKGFKKVVYGLSGGLDSAVVGVLCQKVFKENAHALLMPSSASMPENKTDALSLCKKFSISYTEYSIAPYDAIFGSHFKDASLTRKGNFCARLRMAFLYDYSLKSDSLVIGTSNKSERMLGYGTLFGDLACAINPIGELFKTEVYELARRLNIPKKILNKPPSADLFVGQSDEKDLGYPYSVIDPLLKDIEALFKNKPIDTETLTQLGYDEILVKNITSRIQKNAFKLELPTIAQKFNPK.

31–38 (GLSGGLDS) contacts ATP. Asp-37 contributes to the Mg(2+) binding site. Residue Arg-112 coordinates deamido-NAD(+). Position 132 (Thr-132) interacts with ATP. A Mg(2+)-binding site is contributed by Glu-137. Residues Lys-161 and Ser-183 each contribute to the ATP site.

Belongs to the NAD synthetase family. In terms of assembly, homodimer.

The catalysed reaction is deamido-NAD(+) + NH4(+) + ATP = AMP + diphosphate + NAD(+) + H(+). It functions in the pathway cofactor biosynthesis; NAD(+) biosynthesis; NAD(+) from deamido-NAD(+) (ammonia route): step 1/1. In terms of biological role, catalyzes the ATP-dependent amidation of deamido-NAD to form NAD. Uses ammonia as a nitrogen source. In Helicobacter pylori (strain HPAG1), this protein is NH(3)-dependent NAD(+) synthetase.